The sequence spans 285 residues: MKLAIPNKGRLQQPVLQFLNYVGIRPLSSDERALIIPTNWEGIQLVMLRTEDIPSLVEAGAADIGITGYDYVLESGANVDELIRLDFGKAKIVLAVPLSWDYNSPDQIKQEIRIATKYYNLAKKYITEKGIPAKVVKISGAAEVIPSLGAADAIIDVMSTGTTLKLHGLKPLDTVLETQAVVIGNRYWMKSDEADKINLMLTMMKGALYARNKKMIFMNVPDSKLNNVIQSLPAMLSPTLSKLAKGDAWEVITVIDGDKLPEIIAKVVANGARDIVVVDIEKVIK.

The protein belongs to the ATP phosphoribosyltransferase family. Long subfamily. Mg(2+) serves as cofactor.

Its subcellular location is the cytoplasm. The catalysed reaction is 1-(5-phospho-beta-D-ribosyl)-ATP + diphosphate = 5-phospho-alpha-D-ribose 1-diphosphate + ATP. It participates in amino-acid biosynthesis; L-histidine biosynthesis; L-histidine from 5-phospho-alpha-D-ribose 1-diphosphate: step 1/9. Feedback inhibited by histidine. Catalyzes the condensation of ATP and 5-phosphoribose 1-diphosphate to form N'-(5'-phosphoribosyl)-ATP (PR-ATP). Has a crucial role in the pathway because the rate of histidine biosynthesis seems to be controlled primarily by regulation of HisG enzymatic activity. The chain is ATP phosphoribosyltransferase from Sulfolobus acidocaldarius (strain ATCC 33909 / DSM 639 / JCM 8929 / NBRC 15157 / NCIMB 11770).